Consider the following 204-residue polypeptide: ATP-dependent Clp protease proteolytic subunit (204 aa).

Residue serine 102 is the Nucleophile of the active site. Residue histidine 127 is part of the active site.

Belongs to the peptidase S14 family. As to quaternary structure, fourteen ClpP subunits assemble into 2 heptameric rings which stack back to back to give a disk-like structure with a central cavity, resembling the structure of eukaryotic proteasomes.

The protein resides in the cytoplasm. It catalyses the reaction Hydrolysis of proteins to small peptides in the presence of ATP and magnesium. alpha-casein is the usual test substrate. In the absence of ATP, only oligopeptides shorter than five residues are hydrolyzed (such as succinyl-Leu-Tyr-|-NHMec, and Leu-Tyr-Leu-|-Tyr-Trp, in which cleavage of the -Tyr-|-Leu- and -Tyr-|-Trp bonds also occurs).. In terms of biological role, cleaves peptides in various proteins in a process that requires ATP hydrolysis. Has a chymotrypsin-like activity. Plays a major role in the degradation of misfolded proteins. In Neisseria gonorrhoeae (strain ATCC 700825 / FA 1090), this protein is ATP-dependent Clp protease proteolytic subunit.